Here is a 202-residue protein sequence, read N- to C-terminus: FMN reductase (NADH) RutF (202 aa).

Low complexity predominate over residues 168-191; the sequence is PRAPRGGSAPAEPARGARAIGARP. A disordered region spans residues 168 to 202; the sequence is PRAPRGGSAPAEPARGARAIGARPPEGPVLALRSA.

Belongs to the non-flavoprotein flavin reductase family. RutF subfamily.

It carries out the reaction FMNH2 + NAD(+) = FMN + NADH + 2 H(+). Functionally, catalyzes the reduction of FMN to FMNH2 which is used to reduce pyrimidine by RutA via the Rut pathway. This Methylorubrum populi (strain ATCC BAA-705 / NCIMB 13946 / BJ001) (Methylobacterium populi) protein is FMN reductase (NADH) RutF.